The chain runs to 421 residues: Peroxisomal succinyl-coenzyme A thioesterase (421 aa).

The Charge relay system role is filled by serine 232. An N6-succinyllysine modification is found at lysine 313. Catalysis depends on charge relay system residues aspartate 326 and histidine 360. The short motif at cysteine 419 to leucine 421 is the Microbody targeting signal element.

Belongs to the C/M/P thioester hydrolase family. In terms of tissue distribution, mainly expressed in liver and kidney. Weakly expressed in other tissues including intestine, adrenal gland and adipose tissues.

The protein resides in the peroxisome. The catalysed reaction is succinyl-CoA + H2O = succinate + CoA + H(+). It catalyses the reaction glutaryl-CoA + H2O = glutarate + CoA + H(+). It participates in lipid metabolism; fatty acid metabolism. Functionally, catalyzes the hydrolysis of acyl-CoAs into free fatty acids and coenzyme A (CoASH), regulating their respective intracellular levels. In contrast to its human ortholog, functions essentially as a succinyl-CoA thioesterase with no activity with medium to long chain saturated acyl-CoAs and with a low activity toward glutaryl-CoA. In Mus musculus (Mouse), this protein is Peroxisomal succinyl-coenzyme A thioesterase (Acot4).